The chain runs to 766 residues: Nitrogen permease regulator 3 (766 aa).

An N-terminal signal peptide occupies residues Met-1–Ala-23. Disordered stretches follow at residues Pro-33 to Phe-140, Arg-186 to Gly-257, and Glu-594 to Pro-638. The span at Ser-36–Lys-49 shows a compositional bias: polar residues. Over residues Ser-51–Ser-61 the composition is skewed to low complexity. Residues Asp-62 to Leu-74 show a composition bias toward acidic residues. A compositionally biased stretch (polar residues) spans Arg-89–Gly-110. 2 stretches are compositionally biased toward basic and acidic residues: residues Glu-118–Glu-133 and Gly-217–Glu-250.

This sequence belongs to the NPR3 family.

Functionally, mediates inactivation of the TORC1 complex in response to amino acid starvation. Required for meiotic nuclear division. This Coccidioides immitis (strain RS) (Valley fever fungus) protein is Nitrogen permease regulator 3 (NPR3).